We begin with the raw amino-acid sequence, 381 residues long: MTTNIRKTHPLIKIVNHALVDLPSPSNISIWWNFGSLLGLCLIIQILTGLFLAMHYTADISTAFSSVVHICRDVNYGWLIRNIHANGASLFFICVYLHIARGLYYGSYLFKEAWNIGVILLFLLMATAFVGYVLPWGQMSFWGATVITNLLSAFPYIGDMLVQWIWGGFSIDNATLTRFFAFHFLLPFLIVGLTLIHLLFLHETGSNNPMGLNSDMDKISFHPYFSYKDLLGFFLMIILLALLALFLPNLLGDAENFIPANPLVTPPHIKPEWYFLFAYAILRSIPNKLGGVLALLFSIFILMLIPMLHTSKQRSNIFRPMTQFLFWTLVANAIILTWIGGQPVEQPFILVGQIASVTYFSLFLIIIPLTGWWENKMLNLN.

A run of 4 helical transmembrane segments spans residues phenylalanine 34 to methionine 54, tryptophan 78 to isoleucine 99, tryptophan 114 to leucine 134, and phenylalanine 179 to leucine 199. Residues histidine 84 and histidine 98 each coordinate heme b. The heme b site is built by histidine 183 and histidine 197. Position 202 (histidine 202) interacts with a ubiquinone. 4 consecutive transmembrane segments (helical) span residues tyrosine 227–leucine 247, leucine 289–histidine 309, methionine 321–glycine 341, and phenylalanine 348–proline 368.

Belongs to the cytochrome b family. The cytochrome bc1 complex contains 3 respiratory subunits (MT-CYB, CYC1 and UQCRFS1), 2 core proteins (UQCRC1 and UQCRC2) and probably 6 low-molecular weight proteins. It depends on heme b as a cofactor.

Its subcellular location is the mitochondrion inner membrane. In terms of biological role, component of the ubiquinol-cytochrome c reductase complex (complex III or cytochrome b-c1 complex) that is part of the mitochondrial respiratory chain. The b-c1 complex mediates electron transfer from ubiquinol to cytochrome c. Contributes to the generation of a proton gradient across the mitochondrial membrane that is then used for ATP synthesis. The chain is Cytochrome b (mt-cyb) from Squalus acanthias (Spiny dogfish).